Reading from the N-terminus, the 1424-residue chain is Serine/threonine-protein kinase LMTK3 (1424 aa).

A signal peptide spans 1–20; sequence MPAPGALILLAAVSASGCLA. A helical transmembrane segment spans residues 40–60; the sequence is AVVLISCSGLLAFIFLLLTCL. A disordered region spans residues 74–95; that stretch reads NPEGEDCSGEYTPPAEETSSSQ. Residues 133–411 form the Protein kinase domain; it reads LSYLQEIGSG…SDLQLQLTYL (279 aa). ATP contacts are provided by residues 139-147 and Lys-164; that span reads IGSGWFGKV. Ser-232 is modified (phosphoserine). Asp-266 serves as the catalytic Proton acceptor. Disordered stretches follow at residues 413–465 and 486–516; these read SERP…PDDV and RGAGRGGGAPPWQPASAPPAPHTNPSNPFYE. The segment covering 418–439 has biased composition (pro residues); that stretch reads RPPPPPPPPRDGPFPWPWPPSH. Arg-490 is modified (omega-N-methylarginine). Pro residues predominate over residues 496 to 507; that stretch reads PWQPASAPPAPH. Residues Ser-531 and Ser-535 each carry the phosphoserine modification. Disordered regions lie at residues 544–666, 680–964, 976–1024, 1041–1313, and 1325–1424; these read EHGS…PLPC, LERG…MSPE, MSPK…APET, GLEM…RKRK, and LFDQ…PVEN. Polar residues predominate over residues 571 to 584; the sequence is QTPSEVPQLVSETW. The segment covering 638–647 has biased composition (acidic residues); the sequence is AEEEEEESSP. Residues 700–713 show a composition bias toward basic and acidic residues; that stretch reads PPEDDSSLRAERGS. Over residues 744–758 the composition is skewed to pro residues; that stretch reads RGPPPAPPPPPPPPR. Over residues 759 to 791 the composition is skewed to low complexity; the sequence is ASAEPAASPDPPSALASPGSGLSSPGPKPGDSG. Residues 818–841 show a composition bias toward pro residues; that stretch reads PRAPPEPPDPGAPRPPPDPGPLPL. The span at 935 to 954 shows a compositional bias: basic and acidic residues; it reads DMKEKVAENGLESPEKEERA. Phosphoserine occurs at positions 947, 962, and 977. Over residues 994-1004 the composition is skewed to basic and acidic residues; that stretch reads RNTERPPEIGP. Over residues 1084 to 1094 the composition is skewed to gly residues; the sequence is GSGGRALGGVG. Low complexity predominate over residues 1095 to 1105; the sequence is TAPAGGPASAV. Positions 1167–1177 are enriched in basic and acidic residues; sequence DPLKPERKGPE. The segment covering 1200–1213 has biased composition (low complexity); it reads SRLSLALPPLTLTP. Residues 1231–1241 are compositionally biased toward gly residues; sequence AAGGEAGGAGA. Positions 1245 to 1261 are enriched in acidic residues; it reads AEEDGEDEDEDEEDEEA. The span at 1262 to 1272 shows a compositional bias: basic and acidic residues; it reads AGSRDPGRTRE. Residues 1329–1339 are compositionally biased toward polar residues; the sequence is ETPTNELSVQG. Residues 1348–1360 are compositionally biased toward pro residues; the sequence is STPPAPPTPPHPT.

The protein belongs to the protein kinase superfamily. Tyr protein kinase family. Interacts with ESR1. Interacts with AP-2 complex subunit alpha. Mg(2+) serves as cofactor. In terms of processing, autophosphorylated. Expressed in brain. Predominantly expressed in cerebral cortex, thalamus, the cerebellum and hippocampal formation (at protein level).

Its subcellular location is the membrane. It localises to the cell projection. The protein resides in the axon. The protein localises to the dendrite. It is found in the golgi apparatus membrane. It carries out the reaction L-seryl-[protein] + ATP = O-phospho-L-seryl-[protein] + ADP + H(+). The enzyme catalyses L-threonyl-[protein] + ATP = O-phospho-L-threonyl-[protein] + ADP + H(+). Functionally, protein kinase which phosphorylates ESR1 (in vitro) and protects it against proteasomal degradation. May also regulate ESR1 levels indirectly via a PKC-AKT-FOXO3 pathway where it decreases the activity of PKC and the phosphorylation of AKT, thereby increasing binding of transcriptional activator FOXO3 to the ESR1 promoter and increasing ESR1 transcription. Involved in endocytic trafficking of N-methyl-D-aspartate receptors (NMDAR) in neurons. In Mus musculus (Mouse), this protein is Serine/threonine-protein kinase LMTK3 (Lmtk3).